The sequence spans 122 residues: uncharacterized protein (122 aa).

The segment at 97-122 (TSRNGFSNPNKDGKKNDDDNNSSSKS) is disordered.

This is an uncharacterized protein from Mycoplasma genitalium (strain ATCC 33530 / DSM 19775 / NCTC 10195 / G37) (Mycoplasmoides genitalium).